Here is an 875-residue protein sequence, read N- to C-terminus: Acetyl-coenzyme A carboxylase carboxyl transferase subunit alpha, chloroplastic (875 aa).

The N-terminal 50 residues, 1–50 (MASSSATLVGSTASDLLRSSTTGFTGVPLRTLGRAGLVLKRRDLTVSVTA), are a transit peptide targeting the chloroplast. A CoA carboxyltransferase C-terminal domain is found at 128-380 (EAKYQKALVE…KIAINEAMDE (253 aa)). A coiled-coil region spans residues 664–705 (LLLDKNKAATRKQELKKKSDEHKEAARLEQELKKKFDEVMDT). Residues 845 to 875 (KEKYENLTRPAGDTLTDDKLREKVGVNRNFS) form a disordered region. A compositionally biased stretch (basic and acidic residues) spans 860–869 (TDDKLREKVG).

Belongs to the AccA family. As to quaternary structure, acetyl-CoA carboxylase is a heterohexamer composed of biotin carboxyl carrier protein, biotin carboxylase and two subunits each of ACCase subunit alpha and ACCase plastid-coded subunit beta (accD).

Its subcellular location is the plastid. It localises to the chloroplast inner membrane. It carries out the reaction N(6)-carboxybiotinyl-L-lysyl-[protein] + acetyl-CoA = N(6)-biotinyl-L-lysyl-[protein] + malonyl-CoA. It participates in lipid metabolism; malonyl-CoA biosynthesis; malonyl-CoA from acetyl-CoA: step 1/1. Activated by reductants such as dithiothreitol (DTT), and by thioredoxin in vivo, following exposure to light. Functionally, component of the acetyl coenzyme A carboxylase (ACC) complex. First, biotin carboxylase catalyzes the carboxylation of biotin on its carrier protein (BCCP) and then the CO(2) group is transferred by the carboxyltransferase to acetyl-CoA to form malonyl-CoA. This Pisum sativum (Garden pea) protein is Acetyl-coenzyme A carboxylase carboxyl transferase subunit alpha, chloroplastic (ACCA).